The sequence spans 222 residues: Urease accessory protein UreF (222 aa).

Belongs to the UreF family. In terms of assembly, ureD, UreF and UreG form a complex that acts as a GTP-hydrolysis-dependent molecular chaperone, activating the urease apoprotein by helping to assemble the nickel containing metallocenter of UreC. The UreE protein probably delivers the nickel.

The protein localises to the cytoplasm. Required for maturation of urease via the functional incorporation of the urease nickel metallocenter. This Hahella chejuensis (strain KCTC 2396) protein is Urease accessory protein UreF.